A 288-amino-acid chain; its full sequence is MSKNQGGNKHQGGSKTHLGHRARKRFGQNFLNDDYIIEQIVDAINPLPGENLIEIGPGLAALTEPTVDRSGHLKVIEIDRDLVERLQHHPFLSSKLEVIQADALSIDFSQFAEEGPARVFGNLPYNISTPLIFHLLKFADDVKDMHFMLQKEVVDRLAAEPGSKSYGRISVGVQQACKVTPVVAVPPSAFTPPPKVESSVVRLEPYAESPHPVKDKAQLHSLCLTAFNQRRKTIRNNLKQLVPAEQMEALGIDPGARPETLSVDDYCRISDWLTEHSLTKQAEKNDSQ.

Residues 1 to 14 (MSKNQGGNKHQGGS) are compositionally biased toward polar residues. Residues 1 to 21 (MSKNQGGNKHQGGSKTHLGHR) form a disordered region. Residues Asn-29, Leu-31, Gly-56, Glu-77, Asp-102, and Asn-122 each contribute to the S-adenosyl-L-methionine site.

This sequence belongs to the class I-like SAM-binding methyltransferase superfamily. rRNA adenine N(6)-methyltransferase family. RsmA subfamily.

It is found in the cytoplasm. It catalyses the reaction adenosine(1518)/adenosine(1519) in 16S rRNA + 4 S-adenosyl-L-methionine = N(6)-dimethyladenosine(1518)/N(6)-dimethyladenosine(1519) in 16S rRNA + 4 S-adenosyl-L-homocysteine + 4 H(+). In terms of biological role, specifically dimethylates two adjacent adenosines (A1518 and A1519) in the loop of a conserved hairpin near the 3'-end of 16S rRNA in the 30S particle. May play a critical role in biogenesis of 30S subunits. This is Ribosomal RNA small subunit methyltransferase A from Idiomarina loihiensis (strain ATCC BAA-735 / DSM 15497 / L2-TR).